The primary structure comprises 527 residues: Coproporphyrinogen III oxidase (527 aa).

Over residues Met-1–Val-14 the composition is skewed to low complexity. A disordered region spans residues Met-1–Asp-23. FAD contacts are provided by residues Gly-33 to Gly-38, Glu-56 to Ser-57, Lys-64, and Gly-78 to Ser-81. Residues Arg-231–Ser-267 form a disordered region. Residues Gln-236 to Ser-252 are compositionally biased toward low complexity. FAD contacts are provided by residues Val-300, Trp-448, and Val-487–Leu-489.

Belongs to the protoporphyrinogen/coproporphyrinogen oxidase family. Coproporphyrinogen III oxidase subfamily. FAD serves as cofactor.

The protein localises to the cytoplasm. It carries out the reaction coproporphyrinogen III + 3 O2 = coproporphyrin III + 3 H2O2. It functions in the pathway porphyrin-containing compound metabolism; protoheme biosynthesis. Involved in coproporphyrin-dependent heme b biosynthesis. Catalyzes the oxidation of coproporphyrinogen III to coproporphyrin III. This Propionibacterium freudenreichii subsp. freudenreichii protein is Coproporphyrinogen III oxidase.